A 932-amino-acid polypeptide reads, in one-letter code: MGLTPMMRQYLEVKESCKDCILFFRLGDFYEMFFEDAKVASKELELVLTGRDCGLEERAPMCGIPYHAANTYIGRLVSAGYKIAICEQLEDPSASKGIVKRGIIKIITPGTYTDSSFLEENKNNYIMSFYLDDNMCAMSFADISTGEFNSTHSNFKEAVVLDEISKFAPREIVLEENIKESFIHTIKERFPNISISKIKEENFDYNIDNNLKEQFNNFNENEYETIVKKSANGLLYYIFHTQKNILSNINKIDYYSIVDYLTIDVNSRRNLEITENLREKTKKGSLLWVLDKTNTAMGGRQLRRWIEQPLINKNPIENRLNAVEELLNNISLQEDLKEDLKSIYDIERIVGKVASKSVNAKELISLKCSIGKVPYIKKYLSGFKSDLFLNMEQCIDTLEDIHKLLDKALLDNPSLSVKEGNIIKEGFNEEVDSLREAKSNGKKWIASLEQKEKEETGIKSLKVSYNKVFGYFIEITKANLNLVPEGRYIRKQTLSNAERYITPELKEMEEKILGAEEKLIDIEYKLFTEIRDFIEENIDRMQKTARIISDIDCLCSLATVALENNYIKPNINAKDEILIEEGRHPVVEKVIPKGEFISNDSLIDTKENQLILITGPNMAGKSTYMRQVALITIMAQIGSFVPAKKANISICDKIFTRIGASDDLAAGKSTFMVEMWEVSNILKNATSKSLVLLDEVGRGTSTYDGLSIAWSVIEYICNNKNLRCKTLFATHYHELTKLEDNIEGVKNYSVSVSELENEIVFLRKIIRGGADQSYGIEVAKLAGLPSPVINRAKEILQHIEGDKEENSLNIAPSKEYKSKDYIEVSKDTLNTKNNLGSEIKHDTLSETNTATIIEDESTKEHLSSNRKQINCRINDEKSIKKEVAVDSFQINFEYIKRDKIIEEIKNIDILNMTPMEGFNKLYDIINKTKDID.

615 to 622 contacts ATP; sequence GPNMAGKS.

The protein belongs to the DNA mismatch repair MutS family.

This protein is involved in the repair of mismatches in DNA. It is possible that it carries out the mismatch recognition step. This protein has a weak ATPase activity. This chain is DNA mismatch repair protein MutS, found in Clostridium botulinum (strain Kyoto / Type A2).